We begin with the raw amino-acid sequence, 174 residues long: Inactive signal peptidase IA (174 aa).

At 1-7 (MKKVVKY) the chain is on the cytoplasmic side. Residues 8–28 (LISLILAIIIVLFVQTFVIVG) form a helical membrane-spanning segment. Over 29–174 (HVIPNNDMSP…FSKWTIQFKS (146 aa)) the chain is Extracellular.

The protein belongs to the peptidase S26 family.

It is found in the cell membrane. Catalytically inactive. The chain is Inactive signal peptidase IA (spsA) from Staphylococcus aureus (strain MRSA252).